Here is a 500-residue protein sequence, read N- to C-terminus: MKRSLWVMQVLHWAVMLALVQCGALGARRFRGGRNPQPRRALPSAHYRDRGETTESFSLDFTAVEENMDNFMTQVKNLAQSLYPCSAQKLDYDMKLHFLENTSVTCNDGTPAGYYLKESKGSKRWLIFLEGGWYCFNKENCDSRYETMRRLMSSSKWPQTKTGTGMLSSLPEENPHWWNANMVFIPYCSSDVWSGASPKTDQNDYAFMGSLIIKEVVKDLLSKGLDNAKILLLAGSSAGGTGVLLNVDSVSELLEELGHTNIQVRGLSDSGWFLDNKQYRCTDCVDTINCAPTEVIKRGIKYWGGVVPERCRQAYEGKEWNCFFGYKVYPTIKRPVFIVQWLFDEAQLTVDNIHLTGQPVQEGQWRYIQNLGTELRNTLKDVPAMFAPACLSHEFITRNYWTDVQVKGTSLPRALHCWDRSLQDTSRNNKSPPKGCPVHLIDSCPWPHCNPTCPTIRDQSTGQEMNVIQFLMHMGFDVQKMAHQQGMDPSKLLGMLSSGS.

Positions 1-26 are cleaved as a signal peptide; sequence MKRSLWVMQVLHWAVMLALVQCGALG. Asn-101 carries N-linked (GlcNAc...) asparagine glycosylation. Active-site charge relay system residues include Ser-237, Asp-344, and His-393.

The protein belongs to the pectinacetylesterase family. Notum subfamily.

It localises to the secreted. The enzyme catalyses [Wnt protein]-O-(9Z)-hexadecenoyl-L-serine + H2O = [Wnt protein]-L-serine + (9Z)-hexadecenoate + H(+). In terms of biological role, carboxylesterase that acts as a key negative regulator of the Wnt signaling pathway. Acts by specifically mediating depalmitoleoylation of WNT proteins. Serine palmitoleoylation of WNT proteins is required for efficient binding to frizzled receptors. The protein is Palmitoleoyl-protein carboxylesterase notum1a of Danio rerio (Zebrafish).